The sequence spans 161 residues: Cyclic pyranopterin monophosphate synthase (161 aa).

Substrate contacts are provided by residues 73–75 and 110–111; these read LCH and ME. Asp-125 is an active-site residue.

The protein belongs to the MoaC family. In terms of assembly, homohexamer; trimer of dimers.

It carries out the reaction (8S)-3',8-cyclo-7,8-dihydroguanosine 5'-triphosphate = cyclic pyranopterin phosphate + diphosphate. The protein operates within cofactor biosynthesis; molybdopterin biosynthesis. Catalyzes the conversion of (8S)-3',8-cyclo-7,8-dihydroguanosine 5'-triphosphate to cyclic pyranopterin monophosphate (cPMP). In Pseudomonas savastanoi pv. phaseolicola (strain 1448A / Race 6) (Pseudomonas syringae pv. phaseolicola (strain 1448A / Race 6)), this protein is Cyclic pyranopterin monophosphate synthase.